The following is a 408-amino-acid chain: Large ribosomal subunit protein uL4 (408 aa).

Residues 58-98 (PYAVSKKAGHQTSAESWGTGRAVSRIPRVPGGGTHRAGQGA) form a disordered region.

It belongs to the universal ribosomal protein uL4 family.

This Prunus armeniaca (Apricot) protein is Large ribosomal subunit protein uL4 (RPL4).